Reading from the N-terminus, the 470-residue chain is ATP synthase subunit beta (470 aa).

157 to 164 (GGAGVGKT) provides a ligand contact to ATP.

The protein belongs to the ATPase alpha/beta chains family. In terms of assembly, F-type ATPases have 2 components, CF(1) - the catalytic core - and CF(0) - the membrane proton channel. CF(1) has five subunits: alpha(3), beta(3), gamma(1), delta(1), epsilon(1). CF(0) has three main subunits: a(1), b(2) and c(9-12). The alpha and beta chains form an alternating ring which encloses part of the gamma chain. CF(1) is attached to CF(0) by a central stalk formed by the gamma and epsilon chains, while a peripheral stalk is formed by the delta and b chains.

It is found in the cell inner membrane. It catalyses the reaction ATP + H2O + 4 H(+)(in) = ADP + phosphate + 5 H(+)(out). In terms of biological role, produces ATP from ADP in the presence of a proton gradient across the membrane. The catalytic sites are hosted primarily by the beta subunits. This is ATP synthase subunit beta from Geotalea daltonii (strain DSM 22248 / JCM 15807 / FRC-32) (Geobacter daltonii).